The primary structure comprises 283 residues: Bifunctional protein FolD (283 aa).

NADP(+) is bound by residues glycine 165–serine 167, serine 190, and isoleucine 231.

This sequence belongs to the tetrahydrofolate dehydrogenase/cyclohydrolase family. In terms of assembly, homodimer.

The enzyme catalyses (6R)-5,10-methylene-5,6,7,8-tetrahydrofolate + NADP(+) = (6R)-5,10-methenyltetrahydrofolate + NADPH. The catalysed reaction is (6R)-5,10-methenyltetrahydrofolate + H2O = (6R)-10-formyltetrahydrofolate + H(+). It participates in one-carbon metabolism; tetrahydrofolate interconversion. Catalyzes the oxidation of 5,10-methylenetetrahydrofolate to 5,10-methenyltetrahydrofolate and then the hydrolysis of 5,10-methenyltetrahydrofolate to 10-formyltetrahydrofolate. This is Bifunctional protein FolD from Janthinobacterium sp. (strain Marseille) (Minibacterium massiliensis).